Consider the following 440-residue polypeptide: Glutamyl-tRNA reductase (440 aa).

Residues 40–43 (TCNR), serine 100, 105–107 (ERE), and glutamine 111 each bind substrate. Cysteine 41 functions as the Nucleophile in the catalytic mechanism. 181–186 (GTGAYA) is a binding site for NADP(+).

Belongs to the glutamyl-tRNA reductase family. As to quaternary structure, homodimer.

The enzyme catalyses (S)-4-amino-5-oxopentanoate + tRNA(Glu) + NADP(+) = L-glutamyl-tRNA(Glu) + NADPH + H(+). It functions in the pathway porphyrin-containing compound metabolism; protoporphyrin-IX biosynthesis; 5-aminolevulinate from L-glutamyl-tRNA(Glu): step 1/2. Catalyzes the NADPH-dependent reduction of glutamyl-tRNA(Glu) to glutamate 1-semialdehyde (GSA). The chain is Glutamyl-tRNA reductase from Renibacterium salmoninarum (strain ATCC 33209 / DSM 20767 / JCM 11484 / NBRC 15589 / NCIMB 2235).